A 306-amino-acid polypeptide reads, in one-letter code: Manganese transport system membrane protein MntB (306 aa).

Residues 1–25 (MNQLVVAFPFWHWLVEPLQYEFLIR) lie on the Periplasmic side of the membrane. A helical transmembrane segment spans residues 26–46 (AIWVSAFVGLVCAVLSCYITL). Over 47–48 (KG) the chain is Cytoplasmic. A helical transmembrane segment spans residues 49–69 (WSLMGDAISHAVVPGVVLAYA). The Periplasmic portion of the chain corresponds to 70-71 (LN). Residues 72 to 92 (IPFAIGAFTFGFGATVAIGYV) traverse the membrane as a helical segment. At 93–101 (KSKTRLKED) the chain is on the cytoplasmic side. The chain crosses the membrane as a helical span at residues 102-122 (AVIGIVFTGFFALGLVLVTKI). Residues 123–141 (PSNVDLFHILFGNVLGISQ) lie on the Periplasmic side of the membrane. A helical transmembrane segment spans residues 142–162 (QDIIQTLIAGSITLIVILLRR). The Cytoplasmic portion of the chain corresponds to 163 to 179 (KDLLLFCFDPNHAKAIG). A helical membrane pass occupies residues 180–200 (LRTQVMYYTLLSVLALTIVAA). Topologically, residues 201–202 (LQ) are periplasmic. The helical transmembrane segment at 203 to 223 (TAGIILVISMLVTPGSIGYLL) threads the bilayer. Over 224–228 (SDRFD) the chain is Cytoplasmic. Residues 229-249 (HMLWYSVVSSVLSCVLGTYLS) form a helical membrane-spanning segment. Residues 250 to 255 (YHFDVS) lie on the Periplasmic side of the membrane. A helical membrane pass occupies residues 256–276 (TGGMIVVILTTLFVIAMIGAP). The Cytoplasmic segment spans residues 277–306 (KYGILAQEWRKRSGPNPEDDENQTVVVDQV).

It belongs to the ABC-3 integral membrane protein family.

The protein resides in the cell membrane. Its function is as follows. Part of an ATP-driven transport system for manganese. This Synechocystis sp. (strain ATCC 27184 / PCC 6803 / Kazusa) protein is Manganese transport system membrane protein MntB (mntB).